A 545-amino-acid chain; its full sequence is MWPRAPATPPPPPWPSKPSAASRSALRRLDLDDGRRQGTEGEENHAPLLCSPAMASSTAFAAAFALLLLASSAAAEGEAVLTLDAGNFTEVVGAHDFIVVEFYAPWCGHCNQLAPEYEAAAAALRSHDPPVVLAKVDASADLNRGLAGEHGVQGYPTIRILRDRGARSHNYAGPRDAAGIVAYLKRQAGPASVEIAASASPPAADSIANDGVVVVGVFPELSGSEFESFMAVAEKMRADYDFRHTTDAGVLPRGDRTVRGPLVRLFKPFDELFVDSQDFDRDALEKFIESSGFPTVVTFDTSPANQKYLLKYFDNAGTKAMLFLSFSDDRAEEFRTQFHEAANQYSANNISFLIGDVTASQGAFQYFGLKESEVPLVFILASKSKYIKPTVEPDQILPYLKEFTEGTLAPHVKSEPIPEVNDQPVKTVVADNLREVVFNSGKNVLLEFYAPWCGHCQKLAPILEEVAVSLKDDEDVVIAKMDGTANDVPSDFAVEGYPSMYFYSSGGNLLPYDGRTAEEIIDFITKNKGSRPGEATTTESVKDEL.

Residues 1-16 (MWPRAPATPPPPPWPS) are compositionally biased toward pro residues. Positions 1 to 24 (MWPRAPATPPPPPWPSKPSAASRS) are disordered. The 135-residue stretch at 55–189 (ASSTAFAAAF…IVAYLKRQAG (135 aa)) folds into the Thioredoxin 1 domain. Asn87 is a glycosylation site (N-linked (GlcNAc...) asparagine). Active-site nucleophile residues include Cys107 and Cys110. Cys107 and Cys110 form a disulfide bridge. Residue Asn349 is glycosylated (N-linked (GlcNAc...) asparagine). Residues 403–545 (FTEGTLAPHV…TTTESVKDEL (143 aa)) enclose the Thioredoxin 2 domain. Active-site nucleophile residues include Cys453 and Cys456. Cys453 and Cys456 are joined by a disulfide. The Prevents secretion from ER signature appears at 542 to 545 (KDEL).

The protein belongs to the protein disulfide isomerase family.

Its subcellular location is the endoplasmic reticulum lumen. The catalysed reaction is Catalyzes the rearrangement of -S-S- bonds in proteins.. Acts as a protein-folding catalyst that interacts with nascent polypeptides to catalyze the formation, isomerization, and reduction or oxidation of disulfide bonds. May play a role in storage protein biogenesis. This is Protein disulfide isomerase-like 1-3 (PDIL1-3) from Oryza sativa subsp. japonica (Rice).